Reading from the N-terminus, the 62-residue chain is Protein translocase subunit SecE (62 aa).

A helical transmembrane segment spans residues L40–I60.

It belongs to the SecE/SEC61-gamma family. In terms of assembly, component of the Sec protein translocase complex. Heterotrimer consisting of SecY (alpha), SecG (beta) and SecE (gamma) subunits. The heterotrimers can form oligomers, although 1 heterotrimer is thought to be able to translocate proteins. Interacts with the ribosome. May interact with SecDF, and other proteins may be involved.

It localises to the cell membrane. Functionally, essential subunit of the Sec protein translocation channel SecYEG. Clamps together the 2 halves of SecY. May contact the channel plug during translocation. In Saccharolobus solfataricus (strain ATCC 35092 / DSM 1617 / JCM 11322 / P2) (Sulfolobus solfataricus), this protein is Protein translocase subunit SecE.